Here is a 289-residue protein sequence, read N- to C-terminus: Protease HtpX homolog (289 aa).

Transmembrane regions (helical) follow at residues 5–27 and 40–60; these read LWVR…GYLI and ALFM…SWYN. Residue His133 coordinates Zn(2+). Glu134 is a catalytic residue. Residue His137 participates in Zn(2+) binding. Transmembrane regions (helical) follow at residues 143–163 and 181–201; these read TLIQ…VNFA and IVAL…IQLA. Position 207 (Glu207) interacts with Zn(2+).

The protein belongs to the peptidase M48B family. Zn(2+) serves as cofactor.

Its subcellular location is the cell membrane. This chain is Protease HtpX homolog, found in Pyrococcus furiosus (strain ATCC 43587 / DSM 3638 / JCM 8422 / Vc1).